We begin with the raw amino-acid sequence, 429 residues long: Histidine--tRNA ligase (429 aa).

It belongs to the class-II aminoacyl-tRNA synthetase family. Homodimer.

It localises to the cytoplasm. The catalysed reaction is tRNA(His) + L-histidine + ATP = L-histidyl-tRNA(His) + AMP + diphosphate + H(+). The chain is Histidine--tRNA ligase from Streptococcus pneumoniae (strain Taiwan19F-14).